Reading from the N-terminus, the 456-residue chain is Serine/threonine-protein kinase meng-po (456 aa).

A disordered region spans residues Arg15–Lys78. Residues Ser22 to Thr55 show a composition bias toward low complexity. The Protein kinase domain maps to Tyr101–Val367. Residues Leu107–Ile115 and Lys130 contribute to the ATP site. Asp221 serves as the catalytic Proton acceptor. The residue at position 334 (Ser334) is a Phosphoserine; by PKA.

The protein belongs to the protein kinase superfamily. Ser/Thr protein kinase family. Mg(2+) serves as cofactor. Expressed in the mushroom bodies (at protein level).

The catalysed reaction is L-seryl-[protein] + ATP = O-phospho-L-seryl-[protein] + ADP + H(+). The enzyme catalyses L-threonyl-[protein] + ATP = O-phospho-L-threonyl-[protein] + ADP + H(+). Activated by Pka-C1-mediated phosphorylation of Ser-334. Its function is as follows. Serine/threonine-protein kinase involved in memory formation. Together with the cAMP-dependent protein kinase A Pka-C1, promotes long-term memory (LTM) by regulating CrebB stability and activity. Involved in the maintenance of anesthesia-sensitive memory (ASM) which includes short-term memory (STM) and middle-term memory (MTM). The protein is Serine/threonine-protein kinase meng-po of Drosophila melanogaster (Fruit fly).